We begin with the raw amino-acid sequence, 304 residues long: CRISPR-associated endonuclease Cas1 (304 aa).

Mn(2+) contacts are provided by Glu-148, His-204, and Glu-219.

It belongs to the CRISPR-associated endonuclease Cas1 family. Homodimer, forms a heterotetramer with a Cas2 homodimer. Requires Mg(2+) as cofactor. Mn(2+) is required as a cofactor.

Functionally, CRISPR (clustered regularly interspaced short palindromic repeat), is an adaptive immune system that provides protection against mobile genetic elements (viruses, transposable elements and conjugative plasmids). CRISPR clusters contain spacers, sequences complementary to antecedent mobile elements, and target invading nucleic acids. CRISPR clusters are transcribed and processed into CRISPR RNA (crRNA). Acts as a dsDNA endonuclease. Involved in the integration of spacer DNA into the CRISPR cassette. This Neisseria meningitidis serogroup C (strain 8013) protein is CRISPR-associated endonuclease Cas1.